The chain runs to 294 residues: Taste receptor type 2 member 143 (294 aa).

Residues 1–7 (MPSTPTL) are Extracellular-facing. A helical transmembrane segment spans residues 8-28 (IFIVIFFLVSVASMLQNGFMI). Residues 29 to 43 (IVLGREWMRNRALPA) lie on the Cytoplasmic side of the membrane. A helical membrane pass occupies residues 44 to 64 (VDMIVASLASSRFCLHGIAIL). At 65-80 (NNFLASFDFCYQANFV) the chain is on the extracellular side. Residues 81–101 (GILWDFINTLILWLTAWLAIF) form a helical membrane-spanning segment. The Cytoplasmic segment spans residues 102 to 128 (YCVKISSFSHPVLFWLKWRISQLVPRL). The helical transmembrane segment at 129-149 (LLVSLIMGGLSAIISATGNII) threads the bilayer. The Extracellular portion of the chain corresponds to 150–180 (ANQMIISQGFHGNCTFGHMSLDFYRYYYLSH). N162 is a glycosylation site (N-linked (GlcNAc...) asparagine). A helical transmembrane segment spans residues 181–201 (AVLMWFTPFFLFLVSIIFLMF). The Cytoplasmic segment spans residues 202 to 227 (SLYRHVEKMRGHRPGPWDPRTQAHTM). The helical transmembrane segment at 228–248 (ALKSLTVFITFYILFFLALII) threads the bilayer. The Extracellular portion of the chain corresponds to 249–260 (SSTKSKTMHSYW). The helical transmembrane segment at 261 to 281 (YWVREIIIYTGIFLNSIILVL) threads the bilayer. The Cytoplasmic segment spans residues 282–294 (SNPKLRKALKMRF).

The protein belongs to the G-protein coupled receptor T2R family.

It is found in the membrane. Putative taste receptor which may play a role in the perception of bitterness. The chain is Taste receptor type 2 member 143 from Rattus norvegicus (Rat).